Reading from the N-terminus, the 379-residue chain is Mannitol-1-phosphate 5-dehydrogenase (379 aa).

Ala3–Gly14 serves as a coordination point for NAD(+).

It belongs to the mannitol dehydrogenase family.

The catalysed reaction is D-mannitol 1-phosphate + NAD(+) = beta-D-fructose 6-phosphate + NADH + H(+). In Actinobacillus pleuropneumoniae serotype 5b (strain L20), this protein is Mannitol-1-phosphate 5-dehydrogenase.